The primary structure comprises 281 residues: Phosphatidylglycerol--prolipoprotein diacylglyceryl transferase (281 aa).

The next 4 membrane-spanning stretches (helical) occupy residues 29 to 49 (FYSL…GKMI), 64 to 84 (LFFY…VLFY), 100 to 120 (GGMS…FVSW), and 124 to 144 (LNWL…MFLG). Arg-145 contacts a 1,2-diacyl-sn-glycero-3-phospho-(1'-sn-glycerol). Helical transmembrane passes span 180–200 (QLYQ…LLFW), 209–229 (GVLV…NEFF), and 248–268 (GQWL…YALT).

It belongs to the Lgt family.

It localises to the cell inner membrane. It catalyses the reaction L-cysteinyl-[prolipoprotein] + a 1,2-diacyl-sn-glycero-3-phospho-(1'-sn-glycerol) = an S-1,2-diacyl-sn-glyceryl-L-cysteinyl-[prolipoprotein] + sn-glycerol 1-phosphate + H(+). Its pathway is protein modification; lipoprotein biosynthesis (diacylglyceryl transfer). In terms of biological role, catalyzes the transfer of the diacylglyceryl group from phosphatidylglycerol to the sulfhydryl group of the N-terminal cysteine of a prolipoprotein, the first step in the formation of mature lipoproteins. The protein is Phosphatidylglycerol--prolipoprotein diacylglyceryl transferase of Erythrobacter litoralis (strain HTCC2594).